Here is a 115-residue protein sequence, read N- to C-terminus: Parathyroid hormone (115 aa).

The N-terminal stretch at 1–25 (MIPAKDMAKVMIVMLAICFLTKSDG) is a signal peptide. A propeptide spanning residues 26 to 31 (KSVKKR) is cleaved from the precursor. The tract at residues 51–69 (RVEWLRKKLQDVHNFVALG) is important for receptor binding. Positions 73-115 (APRDAGSQRPRKKEDNVLVESHEKSLGEADKADVNVLTKAKSQ) are disordered. The segment covering 84 to 105 (KKEDNVLVESHEKSLGEADKAD) has biased composition (basic and acidic residues).

The protein belongs to the parathyroid hormone family. Interacts with PTH1R (via N-terminal extracellular domain).

The protein localises to the secreted. Parathyroid hormone elevates calcium level by dissolving the salts in bone and preventing their renal excretion. Acts by binding to its receptor, PTH1R, activating G protein-coupled receptor signaling. Stimulates [1-14C]-2-deoxy-D-glucose (2DG) transport and glycogen synthesis in osteoblastic cells. The polypeptide is Parathyroid hormone (Homo sapiens (Human)).